We begin with the raw amino-acid sequence, 487 residues long: Transcription factor GTE5, chloroplastic (487 aa).

The transit peptide at 1-32 directs the protein to the chloroplast; the sequence is MSSEHISGGGASKTKKHKWSSSQNRPKPMGVS. Disordered regions lie at residues 1–48, 93–127, and 400–487; these read MSSE…NSFA, ANPGGSMAKSGVVGRSKKVKTGNGGGKKSGHGADK, and KNEA…DNGN. In terms of domain architecture, Bromo spans 127–233; it reads KGTVQIFKNC…NMFEDKWVSI (107 aa). In terms of domain architecture, NET spans 320 to 401; the sequence is EEEAPVNNRD…GYKESLSKKN (82 aa). A compositionally biased stretch (basic and acidic residues) spans 400–414; sequence KNEAHGFGSERDAES. Positions 415 to 435 are enriched in polar residues; that stretch reads VHNSIQEPTTLVSGTTTSRVT. The span at 451-487 shows a compositional bias: low complexity; that stretch reads NNASGSSSSNSSSSDSGSCSSDTDSDSSSGRGSDNGN.

In terms of assembly, interacts with SIZ1 (via PHD domain). Sumoylated by SIZ1.

It is found in the plastid. It localises to the chloroplast. This is Transcription factor GTE5, chloroplastic (GTE5) from Arabidopsis thaliana (Mouse-ear cress).